The sequence spans 62 residues: Phycobilisome degradation protein NblA homolog 1 (62 aa).

It to Synechococcus PCC 7942 NblA and some, to chloroplast ycf18.

This chain is Phycobilisome degradation protein NblA homolog 1, found in Synechocystis sp. (strain ATCC 27184 / PCC 6803 / Kazusa).